Here is a 147-residue protein sequence, read N- to C-terminus: Deoxyuridine 5'-triphosphate nucleotidohydrolase (147 aa).

Arg-24 lines the Mg(2+) pocket. Residues 68 to 70 (PRS), 82 to 85 (GVID), Tyr-88, Gly-93, Ile-95, and Arg-111 each bind dUTP.

The protein belongs to the dUTPase family.

It catalyses the reaction dUTP + H2O = dUMP + diphosphate + H(+). Functionally, this enzyme is involved in nucleotide metabolism: it produces dUMP, the immediate precursor of thymidine nucleotides and it decreases the intracellular concentration of dUTP so that uracil cannot be incorporated into DNA. This chain is Deoxyuridine 5'-triphosphate nucleotidohydrolase (OPG046), found in Homo sapiens (Human).